The primary structure comprises 467 residues: Chromosomal replication initiator protein DnaA (467 aa).

The domain I, interacts with DnaA modulators stretch occupies residues 1 to 90 (MSLSLWQQCL…KPVTQTPQAA (90 aa)). Positions 91 to 130 (VTSNVAAPAQVAQTQPQRAAPSTRSGWDNVPAPAEPTYRS) are domain II. The segment covering 98 to 111 (PAQVAQTQPQRAAP) has biased composition (low complexity). The tract at residues 98 to 119 (PAQVAQTQPQRAAPSTRSGWDN) is disordered. Residues 131 to 347 (NVNVKHTFDN…GALNRVIANA (217 aa)) form a domain III, AAA+ region region. 4 residues coordinate ATP: G175, G177, K178, and T179. Positions 348–467 (NFTGRAITID…FSNLIRTLSS (120 aa)) are domain IV, binds dsDNA.

This sequence belongs to the DnaA family. Oligomerizes as a right-handed, spiral filament on DNA at oriC.

The protein resides in the cytoplasm. Plays an essential role in the initiation and regulation of chromosomal replication. ATP-DnaA binds to the origin of replication (oriC) to initiate formation of the DNA replication initiation complex once per cell cycle. Binds the DnaA box (a 9 base pair repeat at the origin) and separates the double-stranded (ds)DNA. Forms a right-handed helical filament on oriC DNA; dsDNA binds to the exterior of the filament while single-stranded (ss)DNA is stabiized in the filament's interior. The ATP-DnaA-oriC complex binds and stabilizes one strand of the AT-rich DNA unwinding element (DUE), permitting loading of DNA polymerase. After initiation quickly degrades to an ADP-DnaA complex that is not apt for DNA replication. Binds acidic phospholipids. The chain is Chromosomal replication initiator protein DnaA from Shigella boydii serotype 4 (strain Sb227).